Reading from the N-terminus, the 89-residue chain is DNA/RNA-binding protein Alba (89 aa).

The protein belongs to the histone-like Alba family.

It is found in the cytoplasm. The protein resides in the chromosome. Its function is as follows. Binds double-stranded DNA tightly but without sequence specificity. Involved in DNA compaction. The chain is DNA/RNA-binding protein Alba from Methanothrix thermoacetophila (strain DSM 6194 / JCM 14653 / NBRC 101360 / PT) (Methanosaeta thermophila).